A 428-amino-acid polypeptide reads, in one-letter code: 3-phosphoshikimate 1-carboxyvinyltransferase (428 aa).

The 3-phosphoshikimate site is built by lysine 21, serine 22, and arginine 26. Lysine 21 lines the phosphoenolpyruvate pocket. 2 residues coordinate phosphoenolpyruvate: glycine 91 and arginine 119. Residues serine 164, glutamine 166, aspartate 313, and lysine 340 each contribute to the 3-phosphoshikimate site. Glutamine 166 provides a ligand contact to phosphoenolpyruvate. The active-site Proton acceptor is the aspartate 313. Positions 344 and 386 each coordinate phosphoenolpyruvate.

Belongs to the EPSP synthase family. As to quaternary structure, monomer.

It localises to the cytoplasm. The catalysed reaction is 3-phosphoshikimate + phosphoenolpyruvate = 5-O-(1-carboxyvinyl)-3-phosphoshikimate + phosphate. Its pathway is metabolic intermediate biosynthesis; chorismate biosynthesis; chorismate from D-erythrose 4-phosphate and phosphoenolpyruvate: step 6/7. Catalyzes the transfer of the enolpyruvyl moiety of phosphoenolpyruvate (PEP) to the 5-hydroxyl of shikimate-3-phosphate (S3P) to produce enolpyruvyl shikimate-3-phosphate and inorganic phosphate. This Campylobacter jejuni subsp. jejuni serotype O:2 (strain ATCC 700819 / NCTC 11168) protein is 3-phosphoshikimate 1-carboxyvinyltransferase.